Reading from the N-terminus, the 392-residue chain is Nicotinate phosphoribosyltransferase (392 aa).

At His-214 the chain carries Phosphohistidine; by autocatalysis.

This sequence belongs to the NAPRTase family. Post-translationally, transiently phosphorylated on a His residue during the reaction cycle. Phosphorylation strongly increases the affinity for substrates and increases the rate of nicotinate D-ribonucleotide production. Dephosphorylation regenerates the low-affinity form of the enzyme, leading to product release.

The enzyme catalyses nicotinate + 5-phospho-alpha-D-ribose 1-diphosphate + ATP + H2O = nicotinate beta-D-ribonucleotide + ADP + phosphate + diphosphate. It functions in the pathway cofactor biosynthesis; NAD(+) biosynthesis; nicotinate D-ribonucleotide from nicotinate: step 1/1. In terms of biological role, catalyzes the synthesis of beta-nicotinate D-ribonucleotide from nicotinate and 5-phospho-D-ribose 1-phosphate at the expense of ATP. The polypeptide is Nicotinate phosphoribosyltransferase (Xanthomonas axonopodis pv. citri (strain 306)).